We begin with the raw amino-acid sequence, 1175 residues long: Tyrosine-protein phosphatase non-receptor type 21 (1175 aa).

The 286-residue stretch at 23–308 folds into the FERM domain; it reads LVARIQLLNN…ARHKFYRLNQ (286 aa). Over residues 395-421 the composition is skewed to polar residues; sequence YSAHSTNSLNTPQPYLQPSPMSSNPSI. Residues 395-445 form a disordered region; sequence YSAHSTNSLNTPQPYLQPSPMSSNPSIPGSDVMRPDYIPSHRHSALIPPSY. Residues S577, S589, S590, S637, S673, S710, S711, S798, S800, and S805 each carry the phosphoserine modification. The disordered stretch occupies residues 663 to 702; the sequence is DVAPRTFSAGSQSSVFSDKVKQEGTEEQGSGGYSHKKSLS. In terms of domain architecture, Tyrosine-protein phosphatase spans 897-1168; sequence VFTEYERILK…TFVYRVLIQF (272 aa). Residues E1068, 1109 to 1115, and Q1153 contribute to the substrate site; that span reads CSAGVGR. C1109 functions as the Phosphocysteine intermediate in the catalytic mechanism.

This sequence belongs to the protein-tyrosine phosphatase family. Non-receptor class subfamily. In terms of tissue distribution, particularly abundantly in adrenal glands.

The protein localises to the cytoplasm. It is found in the cytoskeleton. It catalyses the reaction O-phospho-L-tyrosyl-[protein] + H2O = L-tyrosyl-[protein] + phosphate. The sequence is that of Tyrosine-protein phosphatase non-receptor type 21 (Ptpn21) from Rattus norvegicus (Rat).